We begin with the raw amino-acid sequence, 214 residues long: Large ribosomal subunit protein bL25 (214 aa).

The interval 193–214 (PRAAAEEEDTGAEGDVEAADAE) is disordered. Positions 198–214 (EEEDTGAEGDVEAADAE) are enriched in acidic residues.

This sequence belongs to the bacterial ribosomal protein bL25 family. CTC subfamily. Part of the 50S ribosomal subunit; part of the 5S rRNA/L5/L18/L25 subcomplex. Contacts the 5S rRNA. Binds to the 5S rRNA independently of L5 and L18.

This is one of the proteins that binds to the 5S RNA in the ribosome where it forms part of the central protuberance. This is Large ribosomal subunit protein bL25 from Nitrosococcus oceani (strain ATCC 19707 / BCRC 17464 / JCM 30415 / NCIMB 11848 / C-107).